Consider the following 427-residue polypeptide: UDP-N-acetyl-D-mannosamine dehydrogenase (427 aa).

Residues Tyr19, Ile20, Asp39, Arg44, Thr91, and Thr130 each contribute to the NAD(+) site. UDP-N-acetyl-alpha-D-mannosaminouronate contacts are provided by Arg155, Val156, Lys207, Asn211, Arg214, His245, Arg247, and Gly258. The active-site Proton donor/acceptor is Lys207. Cys261 functions as the Nucleophile in the catalytic mechanism. Residues Tyr318 and Lys319 each contribute to the UDP-N-acetyl-alpha-D-mannosaminouronate site. An NAD(+)-binding site is contributed by Arg326. Lys404 is a UDP-N-acetyl-alpha-D-mannosaminouronate binding site.

This sequence belongs to the UDP-glucose/GDP-mannose dehydrogenase family. As to quaternary structure, homotetramer; probably dimer of dimers.

The catalysed reaction is UDP-N-acetyl-alpha-D-mannosamine + 2 NAD(+) + H2O = UDP-N-acetyl-alpha-D-mannosaminouronate + 2 NADH + 3 H(+). In terms of biological role, catalyzes the four-electron oxidation of UDP-N-acetyl-D-mannosamine (UDP-ManNAc), reducing NAD(+) and releasing UDP-N-acetylmannosaminuronic acid (UDP-ManNAcA). This chain is UDP-N-acetyl-D-mannosamine dehydrogenase (wecC), found in Methanococcus maripaludis (strain C7 / ATCC BAA-1331).